Consider the following 439-residue polypeptide: Ribosomal protein uS12 methylthiotransferase RimO (439 aa).

Residues 7–119 (KQLCLISLGC…IDIMIAKKQN (113 aa)) form the MTTase N-terminal domain. 6 residues coordinate [4Fe-4S] cluster: C16, C50, C82, C151, C155, and C158. The Radical SAM core domain maps to 137-365 (TGSSVHAYVK…NKIALKHQNN (229 aa)).

This sequence belongs to the methylthiotransferase family. RimO subfamily. [4Fe-4S] cluster is required as a cofactor.

The protein resides in the cytoplasm. The enzyme catalyses L-aspartate(89)-[ribosomal protein uS12]-hydrogen + (sulfur carrier)-SH + AH2 + 2 S-adenosyl-L-methionine = 3-methylsulfanyl-L-aspartate(89)-[ribosomal protein uS12]-hydrogen + (sulfur carrier)-H + 5'-deoxyadenosine + L-methionine + A + S-adenosyl-L-homocysteine + 2 H(+). Catalyzes the methylthiolation of an aspartic acid residue of ribosomal protein uS12. The sequence is that of Ribosomal protein uS12 methylthiotransferase RimO from Helicobacter pylori (strain Shi470).